A 212-amino-acid chain; its full sequence is Large ribosomal subunit protein uL3 (212 aa).

The disordered stretch occupies residues 119-147 (YQGNIKRWGQSRGPETHGSRYHRIPGSMG).

It belongs to the universal ribosomal protein uL3 family. Part of the 50S ribosomal subunit. Forms a cluster with proteins L14 and L19.

Functionally, one of the primary rRNA binding proteins, it binds directly near the 3'-end of the 23S rRNA, where it nucleates assembly of the 50S subunit. This chain is Large ribosomal subunit protein uL3, found in Lactobacillus acidophilus (strain ATCC 700396 / NCK56 / N2 / NCFM).